Here is a 252-residue protein sequence, read N- to C-terminus: N-acetylglucosaminyl-phosphatidylinositol de-N-acetylase (252 aa).

Residues 2–22 form a helical membrane-spanning segment; that stretch reads ELVGFLCVAVAVLTWGFLRVW. Residues 23–252 lie on the Cytoplasmic side of the membrane; sequence NSAERMRSPE…YMRINSLRFL (230 aa).

This sequence belongs to the PIGL family.

The protein resides in the endoplasmic reticulum membrane. It carries out the reaction a 6-(N-acetyl-alpha-D-glucosaminyl)-1-(1,2-diacyl-sn-glycero-3-phospho)-1D-myo-inositol + H2O = a 6-(alpha-D-glucosaminyl)-1-(1,2-diacyl-sn-glycero-3-phospho)-1D-myo-inositol + acetate. Its pathway is glycolipid biosynthesis; glycosylphosphatidylinositol-anchor biosynthesis. Its function is as follows. Catalyzes the second step of glycosylphosphatidylinositol (GPI) biosynthesis, which is the de-N-acetylation of N-acetylglucosaminyl-phosphatidylinositol. This chain is N-acetylglucosaminyl-phosphatidylinositol de-N-acetylase (Pigl), found in Mus musculus (Mouse).